The primary structure comprises 262 residues: Type III pantothenate kinase (262 aa).

6 to 13 serves as a coordination point for ATP; that stretch reads DVGNTNAV. Residues Tyr-100 and 107-110 contribute to the substrate site; that span reads GADR. The active-site Proton acceptor is the Asp-109. Asp-129 lines the K(+) pocket. Thr-132 provides a ligand contact to ATP. Residue Thr-184 coordinates substrate.

This sequence belongs to the type III pantothenate kinase family. Homodimer. It depends on NH4(+) as a cofactor. K(+) is required as a cofactor.

It localises to the cytoplasm. The catalysed reaction is (R)-pantothenate + ATP = (R)-4'-phosphopantothenate + ADP + H(+). The protein operates within cofactor biosynthesis; coenzyme A biosynthesis; CoA from (R)-pantothenate: step 1/5. Functionally, catalyzes the phosphorylation of pantothenate (Pan), the first step in CoA biosynthesis. The protein is Type III pantothenate kinase of Bacillus cereus (strain B4264).